Here is a 315-residue protein sequence, read N- to C-terminus: Putative HTH-type transcriptional regulatory protein PH1808 (315 aa).

The 59-residue stretch at 131–189 folds into the HTH cro/C1-type domain; it reads LKALREEHGYSITELAGILGISRKSLQRYEKGESVVSLEVALRLEEVFDEPLVKPIDVL. A DNA-binding region (H-T-H motif) is located at residues 142 to 161; that stretch reads ITELAGILGISRKSLQRYEK.

This Pyrococcus horikoshii (strain ATCC 700860 / DSM 12428 / JCM 9974 / NBRC 100139 / OT-3) protein is Putative HTH-type transcriptional regulatory protein PH1808.